Reading from the N-terminus, the 984-residue chain is Mast/stem cell growth factor receptor Kit (984 aa).

The signal sequence occupies residues M1–T21. Over K22 to P514 the chain is Extracellular. Ig-like C2-type domains lie at P23–S97, I98–R197, P203–D300, P311–N395, and F398–T498. Cystine bridges form between C44–C87, C129–C178, C144–C175, and C226–C284. N-linked (GlcNAc...) asparagine glycosylation is found at N227, N260, N314, N351, N395, N448, and N476. C421 and C487 form a disulfide bridge. Residues L515 to Y535 form a helical membrane-spanning segment. The Cytoplasmic portion of the chain corresponds to K536–V984. Position 558 (Y558) interacts with Mg(2+). Y558 and Y560 each carry phosphotyrosine; by autocatalysis. The Protein kinase domain occupies L579–L926. Residues G586–V593, K613, and E661–D667 contribute to the ATP site. Phosphotyrosine; by autocatalysis is present on residues Y690 and Y707. The segment covering R711–S723 has biased composition (low complexity). A disordered region spans residues R711 to D749. A compositionally biased stretch (acidic residues) spans V737–D749. The Proton acceptor role is filled by D781. Residue R785 participates in ATP binding. The Mg(2+) site is built by N786 and D799. Residues Y812 and Y925 each carry the phosphotyrosine; by autocatalysis modification. Positions P936–R963 are disordered. Polar residues predominate over residues T944 to P960.

Belongs to the protein kinase superfamily. Tyr protein kinase family. CSF-1/PDGF receptor subfamily. Ubiquitinated. Rapidly ubiquitinated after autophosphorylation induced by kitlg/scf binding, leading to internalization and degradation. In terms of processing, autophosphorylated on tyrosine residues. Phosphorylated tyrosine residues are important for interaction with specific binding partners.

It localises to the cell membrane. It carries out the reaction L-tyrosyl-[protein] + ATP = O-phospho-L-tyrosyl-[protein] + ADP + H(+). Tyrosine-protein kinase that acts as a cell-surface receptor for the cytokine kitlg/scf and plays an essential role in the regulation of cell survival and proliferation, hematopoiesis, stem cell maintenance, gametogenesis, mast cell development, migration and function, and in melanogenesis. The protein is Mast/stem cell growth factor receptor Kit (kit) of Takifugu rubripes (Japanese pufferfish).